The sequence spans 393 residues: Na(+)/H(+) antiporter NhaA 1 (393 aa).

11 consecutive transmembrane segments (helical) span residues 23-43 (AGGV…NSPF), 58-78 (LSLT…LVGL), 96-116 (MLPG…FTAF), 126-146 (GWAV…SLLG), 155-175 (VFLA…IAIF), 178-198 (AEIS…LFVM), 224-244 (GVHA…KAAP), 265-285 (VAFI…FAGL), 298-318 (IMLG…WLAI), 334-354 (LYGV…IGLL), and 367-387 (IGVL…LRLV).

This sequence belongs to the NhaA Na(+)/H(+) (TC 2.A.33) antiporter family.

It localises to the cell inner membrane. It catalyses the reaction Na(+)(in) + 2 H(+)(out) = Na(+)(out) + 2 H(+)(in). Its function is as follows. Na(+)/H(+) antiporter that extrudes sodium in exchange for external protons. This Brucella anthropi (strain ATCC 49188 / DSM 6882 / CCUG 24695 / JCM 21032 / LMG 3331 / NBRC 15819 / NCTC 12168 / Alc 37) (Ochrobactrum anthropi) protein is Na(+)/H(+) antiporter NhaA 1.